Here is a 63-residue protein sequence, read N- to C-terminus: ATP synthase F(0) complex subunit 8 (63 aa).

A helical transmembrane segment spans residues 8–24 (TWLLTILSMLLTLFVLF). Lys57 is subject to N6-acetyllysine.

The protein belongs to the ATPase protein 8 family. Component of the ATP synthase complex composed at least of ATP5F1A/subunit alpha, ATP5F1B/subunit beta, ATP5MC1/subunit c (homooctomer), MT-ATP6/subunit a, MT-ATP8/subunit 8, ATP5ME/subunit e, ATP5MF/subunit f, ATP5MG/subunit g, ATP5MK/subunit k, ATP5MJ/subunit j, ATP5F1C/subunit gamma, ATP5F1D/subunit delta, ATP5F1E/subunit epsilon, ATP5PF/subunit F6, ATP5PB/subunit b, ATP5PD/subunit d, ATP5PO/subunit OSCP. ATP synthase complex consists of a soluble F(1) head domain (subunits alpha(3) and beta(3)) - the catalytic core - and a membrane F(0) domain - the membrane proton channel (subunits c, a, 8, e, f, g, k and j). These two domains are linked by a central stalk (subunits gamma, delta, and epsilon) rotating inside the F1 region and a stationary peripheral stalk (subunits F6, b, d, and OSCP). Interacts with PRICKLE3.

Its subcellular location is the mitochondrion membrane. Its function is as follows. Subunit 8, of the mitochondrial membrane ATP synthase complex (F(1)F(0) ATP synthase or Complex V) that produces ATP from ADP in the presence of a proton gradient across the membrane which is generated by electron transport complexes of the respiratory chain. ATP synthase complex consist of a soluble F(1) head domain - the catalytic core - and a membrane F(1) domain - the membrane proton channel. These two domains are linked by a central stalk rotating inside the F(1) region and a stationary peripheral stalk. During catalysis, ATP synthesis in the catalytic domain of F(1) is coupled via a rotary mechanism of the central stalk subunits to proton translocation. In vivo, can only synthesize ATP although its ATP hydrolase activity can be activated artificially in vitro. Part of the complex F(0) domain. This Balaenoptera musculus (Blue whale) protein is ATP synthase F(0) complex subunit 8.